We begin with the raw amino-acid sequence, 202 residues long: Small ribosomal subunit protein uS4 (202 aa).

Basic residues predominate over residues 1 to 13; that stretch reads MSRYRGPRLRITR. A disordered region spans residues 1–43; the sequence is MSRYRGPRLRITRRLGDLPGLTRKAAKRSHPPGQHGQARRKRS. In terms of domain architecture, S4 RNA-binding spans 90–152; the sequence is NRLDNVCFRL…KGSKKLAEAN (63 aa).

Belongs to the universal ribosomal protein uS4 family. As to quaternary structure, part of the 30S ribosomal subunit. Contacts protein S5. The interaction surface between S4 and S5 is involved in control of translational fidelity.

One of the primary rRNA binding proteins, it binds directly to 16S rRNA where it nucleates assembly of the body of the 30S subunit. Its function is as follows. With S5 and S12 plays an important role in translational accuracy. The polypeptide is Small ribosomal subunit protein uS4 (Prochlorococcus marinus (strain MIT 9303)).